Reading from the N-terminus, the 396-residue chain is MSKNKLNLVLPPVNTEATVAAATVAPTPPFKTPSGTDTHSLLGKPKTSIDALTETLEGLDMGDTERKRIKMFLSQKEKIGELSDEDLEKLGELGSGNGGVVMKVRHTHTHLIMARKLIHLEVKPAIKKQILRELKVLHECNFPHIVGFYGAFYSDGEISICMEYMDGGSLDLILKRAGRIPESILGRITLAVLKGLSYLRDNHAIIHRDVKPSNILVNSSGEIKICDFGVSGQLIDSMANSFVGTRSYMSPERLQGTHYSVQSDIWSLGLSLVEMAIGMYPIPPPNTATLESIFADNAEESGQPTDEPRAMAIFELLDYIVNEPPPKLEHKIFSTEFKDFVDICLKKQPDERADLKTLLSHPWIRKAELEEVDISGWVCKTMDLPPSTPKRNTSPN.

Residues 25 to 44 form a disordered region; the sequence is APTPPFKTPSGTDTHSLLGK. A Protein kinase domain is found at 87–364; that stretch reads LEKLGELGSG…LKTLLSHPWI (278 aa). ATP-binding positions include 93–101 and Lys-116; that span reads LGSGNGGVV. Asp-209 acts as the Proton acceptor in catalysis. Ser-237 and Ser-241 each carry phosphoserine; by RAF.

This sequence belongs to the protein kinase superfamily. STE Ser/Thr protein kinase family. MAP kinase kinase subfamily. As to quaternary structure, interacts with Raf and ksr; Dsor1 binding to ksr probably promotes ksr and Raf dimerization and ksr-mediated Raf transactivation. Post-translationally, phosphorylation on Ser/Thr by MAP kinase kinase kinases regulates positively the kinase activity.

The catalysed reaction is L-seryl-[protein] + ATP = O-phospho-L-seryl-[protein] + ADP + H(+). It catalyses the reaction L-threonyl-[protein] + ATP = O-phospho-L-threonyl-[protein] + ADP + H(+). It carries out the reaction L-tyrosyl-[protein] + ATP = O-phospho-L-tyrosyl-[protein] + ADP + H(+). Functionally, required downstream of Raf in the sevenless (sev), torso (tor), and Drosophila EGF receptor homolog (DER) signal transduction pathways. Involved in both positive regulation (at the posterior terminus) and negative regulation (at the anterior domain) of tll, as in other terminal class gene products, maybe via the ERK-A kinase. The polypeptide is Dual specificity mitogen-activated protein kinase kinase dSOR1 (Dsor1) (Drosophila melanogaster (Fruit fly)).